The chain runs to 222 residues: Riboflavin kinase (222 aa).

Residues 1–92 (MVLAEDLECL…CRLFAHEGGH (92 aa)) form an H-T-H motif-like region. The tract at residues 93 to 222 (YTLPGIVISG…DRVNVEVAYD (130 aa)) is riboflavin kinase. A CDP-binding site is contributed by 102-107 (GLGEGR). Mg(2+) is bound by residues Thr131 and Asn133. The FMN site is built by Ser188 and Glu196. 201 to 204 (VGLR) serves as a coordination point for CDP.

The protein belongs to the archaeal riboflavin kinase family. Mg(2+) is required as a cofactor.

The catalysed reaction is riboflavin + CTP = CDP + FMN + H(+). It participates in cofactor biosynthesis; FMN biosynthesis; FMN from riboflavin (CTP route): step 1/1. Functionally, catalyzes the CTP-dependent phosphorylation of riboflavin (vitamin B2) to form flavin mononucleotide (FMN). This is Riboflavin kinase (ribK) from Methanoregula boonei (strain DSM 21154 / JCM 14090 / 6A8).